The sequence spans 478 residues: Bifunctional protein HldE (478 aa).

The tract at residues 1-318 (MKVTLPDFRQ…ENAIRGRADT (318 aa)) is ribokinase. ATP is bound at residue 195–198 (NLSE). Aspartate 264 is an active-site residue. Positions 344-478 (MTNGCFDILH…NMIKASTSQS (135 aa)) are cytidylyltransferase.

In the N-terminal section; belongs to the carbohydrate kinase PfkB family. This sequence in the C-terminal section; belongs to the cytidylyltransferase family. Homodimer.

The catalysed reaction is D-glycero-beta-D-manno-heptose 7-phosphate + ATP = D-glycero-beta-D-manno-heptose 1,7-bisphosphate + ADP + H(+). It catalyses the reaction D-glycero-beta-D-manno-heptose 1-phosphate + ATP + H(+) = ADP-D-glycero-beta-D-manno-heptose + diphosphate. The protein operates within nucleotide-sugar biosynthesis; ADP-L-glycero-beta-D-manno-heptose biosynthesis; ADP-L-glycero-beta-D-manno-heptose from D-glycero-beta-D-manno-heptose 7-phosphate: step 1/4. Its pathway is nucleotide-sugar biosynthesis; ADP-L-glycero-beta-D-manno-heptose biosynthesis; ADP-L-glycero-beta-D-manno-heptose from D-glycero-beta-D-manno-heptose 7-phosphate: step 3/4. Functionally, catalyzes the phosphorylation of D-glycero-D-manno-heptose 7-phosphate at the C-1 position to selectively form D-glycero-beta-D-manno-heptose-1,7-bisphosphate. Catalyzes the ADP transfer from ATP to D-glycero-beta-D-manno-heptose 1-phosphate, yielding ADP-D-glycero-beta-D-manno-heptose. This is Bifunctional protein HldE from Pectobacterium atrosepticum (strain SCRI 1043 / ATCC BAA-672) (Erwinia carotovora subsp. atroseptica).